The primary structure comprises 388 residues: 1-deoxy-D-xylulose 5-phosphate reductoisomerase (388 aa).

Residues threonine 15, glycine 16, serine 17, isoleucine 18, and asparagine 127 each coordinate NADPH. Lysine 128 is a 1-deoxy-D-xylulose 5-phosphate binding site. Residue glutamate 129 coordinates NADPH. Residue aspartate 153 participates in Mn(2+) binding. 1-deoxy-D-xylulose 5-phosphate contacts are provided by serine 154, glutamate 155, serine 179, and histidine 202. Glutamate 155 serves as a coordination point for Mn(2+). Residue glycine 208 participates in NADPH binding. Residues serine 215, asparagine 220, lysine 221, and glutamate 224 each contribute to the 1-deoxy-D-xylulose 5-phosphate site. A Mn(2+)-binding site is contributed by glutamate 224.

It belongs to the DXR family. Mg(2+) is required as a cofactor. It depends on Mn(2+) as a cofactor.

The enzyme catalyses 2-C-methyl-D-erythritol 4-phosphate + NADP(+) = 1-deoxy-D-xylulose 5-phosphate + NADPH + H(+). It participates in isoprenoid biosynthesis; isopentenyl diphosphate biosynthesis via DXP pathway; isopentenyl diphosphate from 1-deoxy-D-xylulose 5-phosphate: step 1/6. Its function is as follows. Catalyzes the NADPH-dependent rearrangement and reduction of 1-deoxy-D-xylulose-5-phosphate (DXP) to 2-C-methyl-D-erythritol 4-phosphate (MEP). The polypeptide is 1-deoxy-D-xylulose 5-phosphate reductoisomerase (Bacteroides fragilis (strain YCH46)).